The sequence spans 131 residues: Transcription antitermination protein NusB (131 aa).

It belongs to the NusB family.

Involved in transcription antitermination. Required for transcription of ribosomal RNA (rRNA) genes. Binds specifically to the boxA antiterminator sequence of the ribosomal RNA (rrn) operons. This chain is Transcription antitermination protein NusB, found in Aliarcobacter butzleri (strain RM4018) (Arcobacter butzleri).